A 553-amino-acid chain; its full sequence is ATP synthase F(1) complex subunit alpha, mitochondrial (553 aa).

The transit peptide at Met1–Leu43 directs the protein to the mitochondrion. At Gln44 the chain carries Pyrrolidone carboxylic acid. Ser53 and Ser65 each carry phosphoserine. Phosphoserine; alternate is present on Ser76. Ser76 is a glycosylation site (O-linked (GlcNAc) serine; alternate). A Phosphoserine modification is found at Ser106. 3 positions are modified to N6-acetyllysine: Lys123, Lys126, and Lys132. The residue at position 134 (Thr134) is a Phosphothreonine. Lys161 is subject to N6-acetyllysine; alternate. Lys161 carries the post-translational modification N6-succinyllysine; alternate. The residue at position 166 (Ser166) is a Phosphoserine. Lys167 carries the post-translational modification N6-acetyllysine; alternate. Lys167 is modified (N6-succinyllysine; alternate). At Ser184 the chain carries Phosphoserine. Position 204 is an omega-N-methylarginine (Arg204). 5 residues coordinate ATP: Gln215, Gly217, Lys218, Thr219, and Ser220. Thr219 contacts Mg(2+). An N6-acetyllysine; alternate mark is found at Lys230 and Lys239. Residues Lys230 and Lys239 each carry the N6-succinyllysine; alternate modification. Lys240 is subject to N6-acetyllysine. N6-acetyllysine; alternate occurs at positions 261 and 305. 2 positions are modified to N6-succinyllysine; alternate: Lys261 and Lys305. Asp312 is a binding site for Mg(2+). Lys427 carries the N6-acetyllysine; alternate modification. The residue at position 427 (Lys427) is an N6-succinyllysine; alternate. An N6-acetyllysine modification is found at Lys434. ATP-binding residues include Gln473 and Gln475. N6-acetyllysine; alternate occurs at positions 498, 506, 531, and 539. 4 positions are modified to N6-succinyllysine; alternate: Lys498, Lys506, Lys531, and Lys539. Lys541 carries the post-translational modification N6-acetyllysine.

The protein belongs to the ATPase alpha/beta chains family. Homotrimer. Component of the ATP synthase complex composed at least of ATP5F1A/subunit alpha, ATP5F1B/subunit beta, ATP5MC1/subunit c (homooctomer), MT-ATP6/subunit a, MT-ATP8/subunit 8, ATP5ME/subunit e, ATP5MF/subunit f, ATP5MG/subunit g, ATP5MK/subunit k, ATP5MJ/subunit j, ATP5F1C/subunit gamma, ATP5F1D/subunit delta, ATP5F1E/subunit epsilon, ATP5PF/subunit F6, ATP5PB/subunit b, ATP5PD/subunit d, ATP5PO/subunit OSCP. ATP synthase complex consists of a soluble F(1) head domain (subunits alpha(3) and beta(3)) - the catalytic core - and a membrane F(0) domain - the membrane proton channel (subunits c, a, 8, e, f, g, k and j). These two domains are linked by a central stalk (subunits gamma, delta, and epsilon) rotating inside the F1 region and a stationary peripheral stalk (subunits F6, b, d, and OSCP). Interacts with ATPAF2. Interacts with HRG; the interaction occurs on the surface of T-cells and alters the cell morphology when associated with concanavalin (in vitro). Interacts with PLG (angiostatin peptide); the interaction inhibits most of the angiogenic properties of angiostatin. Interacts with BLOC1S1. Interacts with BCL2L1 isoform BCL-X(L); the interaction mediates the association of BCL2L1 isoform BCL-X(L) with the mitochondrial membrane F(1)F(0) ATP synthase and enhances neurons metabolic efficiency. Interacts with CLN5 and PPT1. Interacts with S100A1; this interaction increases F1-ATPase activity. Interacts with ABCB7; this interaction allows the regulation of cellular iron homeostasis and cellular reactive oxygen species (ROS) levels in cardiomyocytes. Post-translationally, acetylated on lysine residues. BLOC1S1 is required for acetylation. As to expression, heart muscle (at protein level). Heart and liver.

It is found in the mitochondrion inner membrane. Its subcellular location is the cell membrane. Its function is as follows. Subunit alpha, of the mitochondrial membrane ATP synthase complex (F(1)F(0) ATP synthase or Complex V) that produces ATP from ADP in the presence of a proton gradient across the membrane which is generated by electron transport complexes of the respiratory chain. ATP synthase complex consist of a soluble F(1) head domain - the catalytic core - and a membrane F(1) domain - the membrane proton channel. These two domains are linked by a central stalk rotating inside the F(1) region and a stationary peripheral stalk. During catalysis, ATP synthesis in the catalytic domain of F(1) is coupled via a rotary mechanism of the central stalk subunits to proton translocation. In vivo, can only synthesize ATP although its ATP hydrolase activity can be activated artificially in vitro. With the catalytic subunit beta (ATP5F1B), forms the catalytic core in the F(1) domain. Subunit alpha does not bear the catalytic high-affinity ATP-binding sites. This is ATP synthase F(1) complex subunit alpha, mitochondrial from Bos taurus (Bovine).